Here is a 428-residue protein sequence, read N- to C-terminus: Tyrosine--tRNA ligase (428 aa).

L-tyrosine is bound at residue Tyr-41. A 'HIGH' region motif is present at residues 46 to 55; sequence PTADSLHLGH. The residue at position 148 (Lys-148) is an N6-acetyllysine. 2 residues coordinate L-tyrosine: Tyr-179 and Gln-183. The 'KMSKS' region motif lies at 239–243; it reads KFGKT. Lys-242 is a binding site for ATP. An S4 RNA-binding domain is found at 361-418; it reads ADLMQALVDSELQPSRGQARKTIASNAITINGEKQSDPEYFFKEEDRLFGRFTLLRRG.

It belongs to the class-I aminoacyl-tRNA synthetase family. TyrS type 1 subfamily. As to quaternary structure, homodimer.

The protein localises to the cytoplasm. It carries out the reaction tRNA(Tyr) + L-tyrosine + ATP = L-tyrosyl-tRNA(Tyr) + AMP + diphosphate + H(+). Functionally, catalyzes the attachment of tyrosine to tRNA(Tyr) in a two-step reaction: tyrosine is first activated by ATP to form Tyr-AMP and then transferred to the acceptor end of tRNA(Tyr). The protein is Tyrosine--tRNA ligase of Escherichia coli O1:K1 / APEC.